Here is a 491-residue protein sequence, read N- to C-terminus: Protein DETOXIFICATION 28 (491 aa).

The next 12 helical transmembrane spans lie at Ile47–Ala67, Leu77–Gly97, Ile127–Leu147, Ser160–Ile180, Val192–Val212, Val228–Leu248, Gly272–Leu292, Met302–Gly322, Ile352–Phe372, Ile387–Val407, Leu414–Met434, and Gly444–Ile464.

This sequence belongs to the multi antimicrobial extrusion (MATE) (TC 2.A.66.1) family.

The protein localises to the membrane. The protein is Protein DETOXIFICATION 28 of Arabidopsis thaliana (Mouse-ear cress).